Reading from the N-terminus, the 203-residue chain is MTLRPSLLPLRLLLLLLLLLRGAVCQAEAGSETESPVRTLQVETLVEPPEPCAEPATFGDTLHIHYSGSLVDGRIFDTSLTRDPLVIELGQKQVIPGLEQSLLDMCVGEKRRVIIPSHLAYGKRGFPPSIPADAELHFDVELIALIRANYWQKLVKGILPLVGMAMVPALLGLIGYHLYRKASSPKISKNKLKEEKRNKSKKK.

Residues 1-29 (MTLRPSLLPLRLLLLLLLLLRGAVCQAEA) form the signal peptide. A PPIase FKBP-type domain is found at 59-146 (GDTLHIHYSG…HFDVELIALI (88 aa)). Residues 158–178 (ILPLVGMAMVPALLGLIGYHL) traverse the membrane as a helical segment.

This sequence belongs to the FKBP-type PPIase family. As to quaternary structure, interacts with IFITM5.

It localises to the membrane. It carries out the reaction [protein]-peptidylproline (omega=180) = [protein]-peptidylproline (omega=0). Its function is as follows. PPIases accelerate the folding of proteins during protein synthesis. This Bos taurus (Bovine) protein is Peptidyl-prolyl cis-trans isomerase FKBP11 (FKBP11).